The following is a 340-amino-acid chain: Phenylalanine--tRNA ligase alpha subunit (340 aa).

Glu254 lines the Mg(2+) pocket.

Belongs to the class-II aminoacyl-tRNA synthetase family. Phe-tRNA synthetase alpha subunit type 1 subfamily. As to quaternary structure, tetramer of two alpha and two beta subunits. Mg(2+) is required as a cofactor.

It is found in the cytoplasm. The enzyme catalyses tRNA(Phe) + L-phenylalanine + ATP = L-phenylalanyl-tRNA(Phe) + AMP + diphosphate + H(+). In Chloroherpeton thalassium (strain ATCC 35110 / GB-78), this protein is Phenylalanine--tRNA ligase alpha subunit.